A 305-amino-acid polypeptide reads, in one-letter code: 4-diphosphocytidyl-2-C-methyl-D-erythritol kinase (305 aa).

The active site involves Lys15. Pro99–Ser109 is an ATP binding site. Asp141 is an active-site residue.

Belongs to the GHMP kinase family. IspE subfamily.

It catalyses the reaction 4-CDP-2-C-methyl-D-erythritol + ATP = 4-CDP-2-C-methyl-D-erythritol 2-phosphate + ADP + H(+). Its pathway is isoprenoid biosynthesis; isopentenyl diphosphate biosynthesis via DXP pathway; isopentenyl diphosphate from 1-deoxy-D-xylulose 5-phosphate: step 3/6. Its function is as follows. Catalyzes the phosphorylation of the position 2 hydroxy group of 4-diphosphocytidyl-2C-methyl-D-erythritol. This chain is 4-diphosphocytidyl-2-C-methyl-D-erythritol kinase, found in Marinomonas sp. (strain MWYL1).